A 214-amino-acid polypeptide reads, in one-letter code: Probable nicotinate-nucleotide adenylyltransferase (214 aa).

It belongs to the NadD family.

It carries out the reaction nicotinate beta-D-ribonucleotide + ATP + H(+) = deamido-NAD(+) + diphosphate. The protein operates within cofactor biosynthesis; NAD(+) biosynthesis; deamido-NAD(+) from nicotinate D-ribonucleotide: step 1/1. In terms of biological role, catalyzes the reversible adenylation of nicotinate mononucleotide (NaMN) to nicotinic acid adenine dinucleotide (NaAD). The chain is Probable nicotinate-nucleotide adenylyltransferase from Pelodictyon phaeoclathratiforme (strain DSM 5477 / BU-1).